Reading from the N-terminus, the 380-residue chain is Protein GOLM2 (380 aa).

The residue at position 1 (Met-1) is an N-acetylmethionine. Over 1-14 the chain is Cytoplasmic; the sequence is MVGFGANRRAGRLP. The chain crosses the membrane as a helical; Signal-anchor for type II membrane protein span at residues 15–35; that stretch reads SLVLAVLLVVIAVLAFNYWSI. The stretch at 35-195 forms a coiled coil; the sequence is ISSRHVLLQE…QFLQEQKQEA (161 aa). Over 36–380 the chain is Lumenal; the sequence is SSRHVLLQEE…YGKQRFNDAL (345 aa). Basic and acidic residues-rich tracts occupy residues 192–212 and 227–247; these read KQEAHKFESKGGNELDTDNHA and KNEEPSSHHIPHGKEQIKRGG. Residues 192 to 254 are disordered; the sequence is KQEAHKFESK…RGGDAGMPGI (63 aa). Residues Ser-233 and Ser-275 each carry the phosphoserine modification. Residues 280 to 380 form a disordered region; that stretch reads ESHQVISHLP…YGKQRFNDAL (101 aa). Over residues 305 to 321 the composition is skewed to polar residues; sequence NHNGNSRTSKQNPSNPL. Residues 344 to 380 are compositionally biased toward basic and acidic residues; that stretch reads ATKDRAGDFHKLKQNDEERELQMDPADYGKQRFNDAL.

This sequence belongs to the GOLM family.

It localises to the membrane. The polypeptide is Protein GOLM2 (GOLM2) (Bos taurus (Bovine)).